The chain runs to 188 residues: Calcium load-activated calcium channel (188 aa).

Residues 1–4 (MSTM) are Lumenal-facing. The helical transmembrane segment at 5 to 32 (FADTLLIVFISVCTALLAEGITWVLVYR) threads the bilayer. The stretch at 32–89 (RTDKYKRLKAEVEKQSKKLEKKKETITESAGRQQKKKIERQEEKLKNNNRDLSMVRMK) forms a coiled coil. Residues 33–86 (TDKYKRLKAEVEKQSKKLEKKKETITESAGRQQKKKIERQEEKLKNNNRDLSMV) lie on the Cytoplasmic side of the membrane. A Phosphoserine modification is found at Ser-60. The helical transmembrane segment at 87–106 (RMKSMFAIGFCFTALMGMFN) threads the bilayer. At 107-120 (SIFDGRVVAKLPFT) the chain is on the lumenal side. Residues 121–130 (PLSYIQGLSH) lie within the membrane without spanning it. Topologically, residues 131 to 140 (RNLLGDDTTD) are lumenal. A helical membrane pass occupies residues 141 to 162 (CSFIFLYILCTMSIRQNIQKIL). At 163–188 (GLAPSRAATKQAGGFLGPPPPSGKFS) the chain is on the cytoplasmic side. Ser-188 carries the phosphoserine modification.

Belongs to the TMCO1 family. As to quaternary structure, homodimer and homotetramer. Homodimer under resting conditions; forms homotetramers following ER calcium overload. Component of the GET- and EMC-like (GEL) complex, composed of RAB5IF/OPTI and TMCO1. The GEL complex is part of the multi-pass translocon (MPT) complex, composed of three subcomplexes, the GEL complex (composed of RAB5IF/OPTI and TMCO1), the BOS complex (composed of NCLN/Nicalin, NOMO1 and TMEM147) and the PAT complex (composed of WDR83OS/Asterix and CCDC47). The MPT complex associates with the SEC61 complex.

It is found in the endoplasmic reticulum membrane. The protein localises to the golgi apparatus membrane. Its subcellular location is the mitochondrion membrane. It catalyses the reaction Ca(2+)(in) = Ca(2+)(out). Endoplasmic reticulum (ER) calcium-selective channel preventing intracellular Ca2(+) stores from overfilling and maintaining calcium homeostasis in the ER. In response to endoplasmic reticulum (ER) Ca2(+) overloading, assembles into a homotetramer, forming a functional calcium-selective channel facilitating Ca2(+) release. Mediates ER Ca2(+) homeostasis in osteoblasts and plays a key role in bone formation, via the CaMKII-HDAC4-RUNX2 signaling axis. Component of the multi-pass translocon (MPT) complex that mediates insertion of multi-pass membrane proteins into the lipid bilayer of membranes. The MPT complex takes over after the SEC61 complex: following membrane insertion of the first few transmembrane segments of proteins by the SEC61 complex, the MPT complex occludes the lateral gate of the SEC61 complex to promote insertion of subsequent transmembrane regions. Within the MPT complex, the GEL subcomplex may mediate insertion of transmembrane regions into the membrane. This chain is Calcium load-activated calcium channel, found in Bos taurus (Bovine).